The chain runs to 1167 residues: MAVSPANQATAATTSAESRSEATGIPGAPKRVSFAKIREPLNTPNLLDVQIQSFQWFTGDEAWFQRRVEEGEENPVGGLEEVLNEISPIEDFSGSMSLSFSAPRFDEVKASIEECKDKDMTYAAPLFVTAEFVNNNTGEIKSQTVFLGDFPVMTDKGTFVINGTERVVVSQLVRSPGVYYSKDIDKTSDKDVFSVRVIPSRGAWLEFDVDKRDTVGVRIDRKRRQPVTVLLKALGWTTEAIRERFSFSETLLATLEKDHTAGTDEALLDIYRKLRPGEPPTKESAQTLLENLFFKAKRYDLAKVGRYKVNKKLGLSTPIENGTLTEEDIVTIIEYLVRLHAGEDKMTAANNTEIPVETDDIDHFGNRRIRTVGELIQNQIRVGLSRTERVVRERMTTQDVEAITPQTLINIRPIGAAIKEFFGTSQLSQFMQQTNPIDGLTHKRRLNALGPGGLSRERAGMEVRDVHPSHYGRMCPIETPEGPNIGLIGSLCSYARVNPFGFIETPYRKVVEGRVTDQIDYLTADEEDRFVKAQANAPISDDGTFIEDRVMARRKGGEVELIDPLDIDYMDVSPRQMVSIATAMIPFLEHDDANRALMGANMQRQAVPLLRSQAPYVGTGVELRAAIDSGDMLVAEQSGVVEELSADLITVMHDDGTRKSYSLYKFRRSNHGTCFNHRPIVNEGDRIEAGQVIADGPSTENGEVALGKNLLVAVMPWEGHNYEDAIILSERLVQDDVLTSIHIEEHEIDARDTKLGAEEITRDIPNVSEEVLADLDERGIIRIGAEVRDGDILVGKVTPKGETELTPEERLLRAIFGEKAREVRDTSLKVPHGETGKVIGIRVFSREDDDELPPGVNELVRVYVAQKRKIQPGDKLAGRHGNKGVIGKILPVEDMPFMEDGTPVDIILNTHGVPRRMNIGQILELHLGWLASQGWTIEGDPDWAKNLSAELRDVAPGTNTATPVFDGAKEEELTGLLSATKPNRDGERMVKENGKANLFDGRSGEPYPYPVAVGYMYILKLHHLVDDKIHARSTGPYSMITQQPLGGKAQFGGQRFGEMECWAMQAYGAAYTLQELLTIKSDDVVGRVKVYEAIVKGENIPEPGIPESFKVLLKELQSLCLNVEVLSSDGSSIEMRDSDDEDLERAAANLGINLSRNESPSVDDVVH.

A disordered region spans residues 1-27 (MAVSPANQATAATTSAESRSEATGIPG). Low complexity predominate over residues 9-23 (ATAATTSAESRSEAT).

The protein belongs to the RNA polymerase beta chain family. In terms of assembly, the RNAP catalytic core consists of 2 alpha, 1 beta, 1 beta' and 1 omega subunit. When a sigma factor is associated with the core the holoenzyme is formed, which can initiate transcription.

The enzyme catalyses RNA(n) + a ribonucleoside 5'-triphosphate = RNA(n+1) + diphosphate. In terms of biological role, DNA-dependent RNA polymerase catalyzes the transcription of DNA into RNA using the four ribonucleoside triphosphates as substrates. The sequence is that of DNA-directed RNA polymerase subunit beta from Amycolatopsis mediterranei (strain S699) (Nocardia mediterranei).